A 224-amino-acid chain; its full sequence is dTTP/UTP pyrophosphatase (224 aa).

The Proton acceptor role is filled by Asp-77.

Belongs to the Maf family. YhdE subfamily. Requires a divalent metal cation as cofactor.

The protein resides in the cytoplasm. It catalyses the reaction dTTP + H2O = dTMP + diphosphate + H(+). The catalysed reaction is UTP + H2O = UMP + diphosphate + H(+). Its function is as follows. Nucleoside triphosphate pyrophosphatase that hydrolyzes dTTP and UTP. May have a dual role in cell division arrest and in preventing the incorporation of modified nucleotides into cellular nucleic acids. This is dTTP/UTP pyrophosphatase from Dehalococcoides mccartyi (strain CBDB1).